The following is an 860-amino-acid chain: Leucine--tRNA ligase (860 aa).

A 'HIGH' region motif is present at residues 42-52; it reads PYPSGRLHMGH. The short motif at 619–623 is the 'KMSKS' region element; the sequence is KMSKS. Lys-622 is an ATP binding site.

The protein belongs to the class-I aminoacyl-tRNA synthetase family.

It localises to the cytoplasm. The enzyme catalyses tRNA(Leu) + L-leucine + ATP = L-leucyl-tRNA(Leu) + AMP + diphosphate. The polypeptide is Leucine--tRNA ligase (Escherichia coli O45:K1 (strain S88 / ExPEC)).